We begin with the raw amino-acid sequence, 208 residues long: Uracil phosphoribosyltransferase (208 aa).

5-phospho-alpha-D-ribose 1-diphosphate contacts are provided by residues Arg78, Arg103, and 130–138 (DPMLATGGS). Uracil is bound by residues Ile193 and 198–200 (GDA). Asp199 is a 5-phospho-alpha-D-ribose 1-diphosphate binding site.

It belongs to the UPRTase family. It depends on Mg(2+) as a cofactor.

The catalysed reaction is UMP + diphosphate = 5-phospho-alpha-D-ribose 1-diphosphate + uracil. It participates in pyrimidine metabolism; UMP biosynthesis via salvage pathway; UMP from uracil: step 1/1. Allosterically activated by GTP. Catalyzes the conversion of uracil and 5-phospho-alpha-D-ribose 1-diphosphate (PRPP) to UMP and diphosphate. This is Uracil phosphoribosyltransferase from Trichlorobacter lovleyi (strain ATCC BAA-1151 / DSM 17278 / SZ) (Geobacter lovleyi).